The primary structure comprises 822 residues: Ribonucleoside-diphosphate reductase large subunit (822 aa).

Substrate is bound by residues Thr249, 264 to 265 (SC), Gly295, 470 to 474 (NLCTE), and 651 to 655 (PTAAS). Cys265 and Cys487 are oxidised to a cystine. The active-site Proton acceptor is the Asn470. The Cysteine radical intermediate role is filled by Cys472. The active-site Proton acceptor is Glu474.

The protein belongs to the ribonucleoside diphosphate reductase large chain family. Heterotetramer composed of a homodimer of the large subunit (R1) and a homodimer of the small subunit (R2). Larger multisubunit protein complex are also active, composed of (R1)n(R2)n.

The enzyme catalyses a 2'-deoxyribonucleoside 5'-diphosphate + [thioredoxin]-disulfide + H2O = a ribonucleoside 5'-diphosphate + [thioredoxin]-dithiol. Its function is as follows. Ribonucleoside-diphosphate reductase holoenzyme provides the precursors necessary for viral DNA synthesis. Allows virus growth in non-dividing cells, as well as reactivation from latency in infected hosts. Catalyzes the biosynthesis of deoxyribonucleotides from the corresponding ribonucleotides. The polypeptide is Ribonucleoside-diphosphate reductase large subunit (Gallus gallus (Chicken)).